A 535-amino-acid polypeptide reads, in one-letter code: L-aspartate oxidase (535 aa).

FAD contacts are provided by residues 16 to 19 (SGAA), Lys38, 45 to 52 (ATFYAQGG), and Asp223. Arg290 acts as the Proton donor/acceptor in catalysis. FAD-binding positions include Glu375 and 391–392 (SL).

The protein belongs to the FAD-dependent oxidoreductase 2 family. NadB subfamily. Requires FAD as cofactor.

It localises to the cytoplasm. It catalyses the reaction L-aspartate + O2 = iminosuccinate + H2O2. It functions in the pathway cofactor biosynthesis; NAD(+) biosynthesis; iminoaspartate from L-aspartate (oxidase route): step 1/1. Catalyzes the oxidation of L-aspartate to iminoaspartate, the first step in the de novo biosynthesis of NAD(+). This Vibrio cholerae serotype O1 (strain ATCC 39315 / El Tor Inaba N16961) protein is L-aspartate oxidase (nadB).